The primary structure comprises 485 residues: Cobyric acid synthase (485 aa).

One can recognise a GATase cobBQ-type domain in the interval 248–435 (VLKVVVPVLP…LHGLFESPDA (188 aa)). C329 functions as the Nucleophile in the catalytic mechanism. The active site involves H427.

This sequence belongs to the CobB/CobQ family. CobQ subfamily.

The protein operates within cofactor biosynthesis; adenosylcobalamin biosynthesis. Catalyzes amidations at positions B, D, E, and G on adenosylcobyrinic A,C-diamide. NH(2) groups are provided by glutamine, and one molecule of ATP is hydrogenolyzed for each amidation. The protein is Cobyric acid synthase of Stutzerimonas stutzeri (strain A1501) (Pseudomonas stutzeri).